The chain runs to 377 residues: Opsin-5 (377 aa).

The Extracellular segment spans residues 1-33 (MALNHTALPQDERLPHYLRDEDPFASKLSWEAD). Asn-4 carries N-linked (GlcNAc...) asparagine glycosylation. A helical transmembrane segment spans residues 34–54 (LVAGFYLTIIGILSTFGNGYV). Residues 55-74 (LYMSSRRKKKLRPAEIMTIN) are Cytoplasmic-facing. Residues 75–95 (LAVCDLGISVVGKPFTIISCF) traverse the membrane as a helical segment. The Extracellular portion of the chain corresponds to 96–108 (CHRWVFGWFGCRW). A disulfide bridge links Cys-106 with Cys-183. The chain crosses the membrane as a helical span at residues 109 to 129 (YGWAGFFFGCGSLITMTAVSL). Residues 130-150 (DRYLKICYLSYGVWLKRKHAY) are Cytoplasmic-facing. Residues 151–171 (ICLAVIWAYASFWTTMPLVGL) traverse the membrane as a helical segment. Residues 172-197 (GDYAPEPFGTSCTLDWWLAQASGGGQ) lie on the Extracellular side of the membrane. The chain crosses the membrane as a helical span at residues 198-218 (VFILSILFFCLLLPTAVIVFS). Residues 219–252 (YAKIIAKVKSSSKEVAHFDSRIHSSHVLEVKLTK) lie on the Cytoplasmic side of the membrane. A helical transmembrane segment spans residues 253–273 (VAMLICAGFLIAWIPYAVVSV). At 274–288 (WSAFGRPDSIPIQLS) the chain is on the extracellular side. Residues 289 to 309 (VVPTLLAKSAAMYNPIIYQVI) traverse the membrane as a helical segment. Lys-296 carries the post-translational modification N6-(retinylidene)lysine. Over 310 to 377 (DYRFACCQAG…HSNDGDCGKK (68 aa)) the chain is Cytoplasmic. S-palmitoyl cysteine attachment occurs at residues Cys-315 and Cys-316. The disordered stretch occupies residues 357 to 377 (FTSAHVMDGESHSNDGDCGKK). The span at 363–377 (MDGESHSNDGDCGKK) shows a compositional bias: basic and acidic residues.

The protein belongs to the G-protein coupled receptor 1 family. Opsin subfamily. Post-translationally, it is uncertain whether Cys-315 or Cys-316 is palmitoylated. In terms of tissue distribution, expressed in the brain (at protein level). Weakly expressed in the skin and liver (at protein level). Abundantly expressed in striated muscle cells. Expressed in Math7/Atok7-dependent retinal ganglion cells in the ganglion cell layer (at protein level). Additionally expressed in horizontal and amacrine cells in the inner nuclear layer of the retina (at protein level). Expressed around the base of hair follicles and in epidermal and sebaceous gland cells of the outer ear (at protein level). Abundantly expressed in vibrissae hair follicles and weakly expressed in the vibrissae skin pad, dorsal back skin, and tail.

It localises to the cell membrane. G-protein coupled receptor which selectively activates G(i) type G proteins via ultraviolet A (UVA) light-mediated activation in the retina. Preferentially binds the chromophore 11-cis retinal and is a bistable protein that displays emission peaks at 380 nm (UVA light) and 470 nm (blue light). Required for the light-response in the inner plexiform layer, and contributes to the regulation of the light-response in the nerve fiber layer, via phosphorylated DAT/SLC6A3 dopamine uptake. Involved in local corneal and retinal circadian rhythm photoentrainment via modulation of the UVA light-induced phase-shift of the retina clock. Acts as a circadian photoreceptor in the outer ear and vibrissal pads, via modulation of circadian clock-gene expression in response to violet light during the light-to-dark transition phase and night phase of the circadian cycle. Required in the retina to negatively regulate hyaloid vessel regression during postnatal development via light-dependent OPN5-SLC32A1-DRD2-VEGFR2 signaling. Involved in the light-dependent regulation of retina and vitreous compartment dopamine levels. The protein is Opsin-5 (Opn5) of Mus musculus (Mouse).